The sequence spans 110 residues: UPF0122 protein SE_0911 (110 aa).

It belongs to the UPF0122 family.

Functionally, might take part in the signal recognition particle (SRP) pathway. This is inferred from the conservation of its genetic proximity to ftsY/ffh. May be a regulatory protein. The polypeptide is UPF0122 protein SE_0911 (Staphylococcus epidermidis (strain ATCC 12228 / FDA PCI 1200)).